The sequence spans 375 residues: Growth/differentiation factor 8 (375 aa).

The N-terminal stretch at 1-18 (MQKLQISVYIYLFMLIVA) is a signal peptide. Residues 19-266 (GPVDLNEKSE…VTDTPKRSRR (248 aa)) constitute a propeptide that is removed on maturation. N-linked (GlcNAc...) asparagine glycans are attached at residues Asn47 and Asn71. 4 disulfide bridges follow: Cys272–Cys282, Cys281–Cys340, Cys309–Cys372, and Cys313–Cys374.

Belongs to the TGF-beta family. As to quaternary structure, homodimer; disulfide-linked. Interacts with WFIKKN2, leading to inhibit its activity. Interacts with FSTL3. Synthesized as large precursor molecule that undergoes proteolytic cleavage to generate an N-terminal propeptide and a disulfide linked C-terminal dimer, which is the biologically active molecule. The circulating form consists of a latent complex of the C-terminal dimer and other proteins, including its propeptide, which maintain the C-terminal dimer in a latent, inactive state. Ligand activation requires additional cleavage of the prodomain by a tolloid-like metalloproteinase.

It localises to the secreted. Functionally, acts specifically as a negative regulator of skeletal muscle growth. The chain is Growth/differentiation factor 8 (MSTN) from Taurotragus derbianus (Giant eland).